Here is a 233-residue protein sequence, read N- to C-terminus: MAEFNGIRAIVTDIEGTTSSISFVHEVLFPYAAKHMDAFIRENFSAPAVAEQLDEVARLGGVDRKSPDALIKQLLDWIAEDKKITPLKALQGMIWRSGYDEGAYKGHVYPEVAERLRHWRELGIRLFVYSSGSVAAQKQIFGFSEAGDLTPLFSGYFDTRVGGKRDADSYRAIVREVSEPASSVLFLSDVPAELSAAAEAELQVCQLVRGAGIERQETYPAVASFADLLIKPA.

This sequence belongs to the HAD-like hydrolase superfamily. MasA/MtnC family. Monomer. Requires Mg(2+) as cofactor.

It carries out the reaction 5-methylsulfanyl-2,3-dioxopentyl phosphate + H2O = 1,2-dihydroxy-5-(methylsulfanyl)pent-1-en-3-one + phosphate. Its pathway is amino-acid biosynthesis; L-methionine biosynthesis via salvage pathway; L-methionine from S-methyl-5-thio-alpha-D-ribose 1-phosphate: step 3/6. It participates in amino-acid biosynthesis; L-methionine biosynthesis via salvage pathway; L-methionine from S-methyl-5-thio-alpha-D-ribose 1-phosphate: step 4/6. Functionally, bifunctional enzyme that catalyzes the enolization of 2,3-diketo-5-methylthiopentyl-1-phosphate (DK-MTP-1-P) into the intermediate 2-hydroxy-3-keto-5-methylthiopentenyl-1-phosphate (HK-MTPenyl-1-P), which is then dephosphorylated to form the acireductone 1,2-dihydroxy-3-keto-5-methylthiopentene (DHK-MTPene). The chain is Enolase-phosphatase E1 from Hahella chejuensis (strain KCTC 2396).